Here is a 173-residue protein sequence, read N- to C-terminus: NADH-ubiquinone oxidoreductase chain 6 (173 aa).

Transmembrane regions (helical) follow at residues 1 to 21 (MTYFVIFLGVCFMLGTLAVAS), 27 to 47 (YGVVGLVLASVVGCGWLVNLG), 48 to 68 (VSFVSLVLFMIYLGGMLVVFV), 87 to 107 (VMGYGLGFVLVVCMGMGLGGF), and 139 to 159 (YGVGLFLVAGWGLLLVLFVVL).

The protein belongs to the complex I subunit 6 family.

It localises to the mitochondrion membrane. It catalyses the reaction a ubiquinone + NADH + 5 H(+)(in) = a ubiquinol + NAD(+) + 4 H(+)(out). In terms of biological role, core subunit of the mitochondrial membrane respiratory chain NADH dehydrogenase (Complex I) that is believed to belong to the minimal assembly required for catalysis. Complex I functions in the transfer of electrons from NADH to the respiratory chain. The immediate electron acceptor for the enzyme is believed to be ubiquinone. This is NADH-ubiquinone oxidoreductase chain 6 (MT-ND6) from Coturnix japonica (Japanese quail).